The primary structure comprises 167 residues: Large ribosomal subunit protein uL10 (167 aa).

It belongs to the universal ribosomal protein uL10 family. In terms of assembly, part of the ribosomal stalk of the 50S ribosomal subunit. The N-terminus interacts with L11 and the large rRNA to form the base of the stalk. The C-terminus forms an elongated spine to which L12 dimers bind in a sequential fashion forming a multimeric L10(L12)X complex.

Its function is as follows. Forms part of the ribosomal stalk, playing a central role in the interaction of the ribosome with GTP-bound translation factors. This Chromohalobacter salexigens (strain ATCC BAA-138 / DSM 3043 / CIP 106854 / NCIMB 13768 / 1H11) protein is Large ribosomal subunit protein uL10.